We begin with the raw amino-acid sequence, 1093 residues long: Phosphorylase b kinase regulatory subunit beta (1093 aa).

Alanine 2 carries the N-acetylalanine modification. Residue alanine 4 is modified to Phosphoserine. The interval 7-29 (LTAEVSWKVLERRARTKRSGSVY) is calmodulin-binding. Serine 12 is subject to Phosphoserine; by autocatalysis. Residues serine 27 and serine 701 each carry the phosphoserine modification. Residues 689 to 716 (EPPKHSKVKRQSSTPSAPELGQQPDVNI) are disordered. Calmodulin-binding regions lie at residues 768 to 795 (RVYR…FSSS) and 920 to 951 (NGRC…ILER). Cysteine 1090 carries S-farnesyl cysteine lipidation.

This sequence belongs to the phosphorylase b kinase regulatory chain family. As to quaternary structure, hexadecamer of 4 heterotetramers, each composed of alpha, beta, gamma, and delta subunits. Alpha (PHKA1 or PHKA2) and beta (PHKB) are regulatory subunits, gamma (PHKG1 or PHKG2) is the catalytic subunit, and delta is calmodulin. Ser-701 is probably phosphorylated by PKA. Post-translationally, although the final Cys may be farnesylated, the terminal tripeptide is probably not removed, and the C-terminus is not methylated.

The protein resides in the cell membrane. It functions in the pathway glycan biosynthesis; glycogen metabolism. By phosphorylation of various serine residues. Phosphorylase b kinase catalyzes the phosphorylation of serine in certain substrates, including troponin I. The beta chain acts as a regulatory unit and modulates the activity of the holoenzyme in response to phosphorylation. The sequence is that of Phosphorylase b kinase regulatory subunit beta (PHKB) from Homo sapiens (Human).